The primary structure comprises 385 residues: Succinate--CoA ligase [ADP-forming] subunit beta (385 aa).

The ATP-grasp domain maps to 9–240 (KEIFAKYGIP…ETQLPQLEVE (232 aa)). ATP is bound by residues Lys46, 53-55 (GRG), Glu98, Thr101, and Glu106. Mg(2+)-binding residues include Asn195 and Asp209. Residues Asn260 and 317–319 (GIL) contribute to the substrate site.

Belongs to the succinate/malate CoA ligase beta subunit family. In terms of assembly, heterotetramer of two alpha and two beta subunits. Mg(2+) serves as cofactor.

The catalysed reaction is succinate + ATP + CoA = succinyl-CoA + ADP + phosphate. It carries out the reaction GTP + succinate + CoA = succinyl-CoA + GDP + phosphate. It functions in the pathway carbohydrate metabolism; tricarboxylic acid cycle; succinate from succinyl-CoA (ligase route): step 1/1. Its function is as follows. Succinyl-CoA synthetase functions in the citric acid cycle (TCA), coupling the hydrolysis of succinyl-CoA to the synthesis of either ATP or GTP and thus represents the only step of substrate-level phosphorylation in the TCA. The beta subunit provides nucleotide specificity of the enzyme and binds the substrate succinate, while the binding sites for coenzyme A and phosphate are found in the alpha subunit. The chain is Succinate--CoA ligase [ADP-forming] subunit beta from Aquifex aeolicus (strain VF5).